The sequence spans 314 residues: Olfactory receptor 5B12 (314 aa).

The Extracellular portion of the chain corresponds to M1–I23. N3 carries N-linked (GlcNAc...) asparagine glycosylation. The helical transmembrane segment at P24–I44 threads the bilayer. At E45–C52 the chain is on the cytoplasmic side. A helical transmembrane segment spans residues L53–S73. Residues A74 to T97 are Extracellular-facing. C95 and C187 are oxidised to a cystine. Residues Q98–Y118 form a helical membrane-spanning segment. At D119–N137 the chain is on the cytoplasmic side. A helical transmembrane segment spans residues V138 to T158. Residues G159 to E194 lie on the Extracellular side of the membrane. Residues M195–S215 form a helical membrane-spanning segment. Residues Y216–A235 lie on the Cytoplasmic side of the membrane. A helical transmembrane segment spans residues F236–M256. Topologically, residues Y257 to D269 are extracellular. N261 is a glycosylation site (N-linked (GlcNAc...) asparagine). A helical transmembrane segment spans residues K270–L290. Over R291–F314 the chain is Cytoplasmic.

The protein belongs to the G-protein coupled receptor 1 family.

The protein localises to the cell membrane. Odorant receptor. The protein is Olfactory receptor 5B12 (OR5B12) of Homo sapiens (Human).